A 263-amino-acid chain; its full sequence is Microtubule-associated protein RP/EB family member 1 (263 aa).

Positions 14-116 constitute a Calponin-homology (CH) domain; it reads NLSRHDMLAW…FVQWFKKFFD (103 aa). Positions 180–250 constitute an EB1 C-terminal domain; sequence KKAAGDDESA…LYATDEGFVI (71 aa).

This sequence belongs to the MAPRE family.

Its subcellular location is the cytoplasm. The protein localises to the cytoskeleton. It localises to the microtubule organizing center. The protein resides in the centrosome. It is found in the golgi apparatus. Its subcellular location is the spindle. The protein localises to the spindle pole. Plus-end tracking protein (+TIP) that binds to the plus-end of microtubules and regulates the dynamics of the microtubule cytoskeleton. Promotes cytoplasmic microtubule nucleation and elongation. Involved in mitotic spindle positioning by stabilizing microtubules and promoting dynamic connection between astral microtubules and the cortex during mitotic chromosome segregation. The sequence is that of Microtubule-associated protein RP/EB family member 1 (MAPRE1) from Coturnix coturnix (Common quail).